The sequence spans 809 residues: Chloride channel protein F (809 aa).

At 1 to 65 the chain is on the cytoplasmic side; sequence MSTSKYSKMI…SWAKFARLNN (65 aa). 11 consecutive transmembrane segments (helical) span residues 66–86, 110–130, 152–172, 218–238, 246–266, 295–315, 333–353, 395–415, 425–445, 459–479, and 486–506; these read FYIW…LVAV, LQYL…CFII, FWNP…GLLL, AACC…GVLF, FYLI…AVGI, LIAF…FISL, ITPF…SFPL, GIIL…AVSI, IPLF…MLVL, VVGA…AMII, and LTYM…GNLL. Residues 539-597 form the CBS 1 domain; that stretch reads MKRDLYYVCQNTTLSQISNLLKRVDEHSIPVVSSDNDLQLIGTISTTTLEEVIAYHERL. Disordered regions lie at residues 604–646 and 692–729; these read PLSL…NNQN and NNNF…NNNS. Low complexity predominate over residues 620-646; it reads NDNINNNQNNNNNNNNNNNNNNSNNQN. The CBS 2 domain occupies 756-809; that stretch reads IDSSPFQIQETMPVRKIVFMFMMLGGNILYVTNKGKLTGVVAKTELVHQNNNKH.

It belongs to the chloride channel (TC 2.A.49) family.

The protein localises to the membrane. Voltage-gated chloride channel. Chloride channels may have several functions including the regulation of cell volume, membrane potential stabilization and signal transduction. This Dictyostelium discoideum (Social amoeba) protein is Chloride channel protein F (clcF).